Reading from the N-terminus, the 348-residue chain is 3-isopropylmalate dehydrogenase (348 aa).

Residue 76 to 87 (GPKWTDPNNRPE) coordinates NAD(+). Residues Arg-94, Arg-104, Arg-132, and Asp-217 each contribute to the substrate site. The Mg(2+) site is built by Asp-217, Asp-241, and Asp-245. 275 to 287 (GSAPDIAGKNVAN) is a binding site for NAD(+).

Belongs to the isocitrate and isopropylmalate dehydrogenases family. LeuB type 1 subfamily. In terms of assembly, homodimer. It depends on Mg(2+) as a cofactor. Mn(2+) serves as cofactor.

It localises to the cytoplasm. It catalyses the reaction (2R,3S)-3-isopropylmalate + NAD(+) = 4-methyl-2-oxopentanoate + CO2 + NADH. It participates in amino-acid biosynthesis; L-leucine biosynthesis; L-leucine from 3-methyl-2-oxobutanoate: step 3/4. Its function is as follows. Catalyzes the oxidation of 3-carboxy-2-hydroxy-4-methylpentanoate (3-isopropylmalate) to 3-carboxy-4-methyl-2-oxopentanoate. The product decarboxylates to 4-methyl-2 oxopentanoate. The chain is 3-isopropylmalate dehydrogenase from Staphylococcus aureus (strain MRSA252).